Here is a 273-residue protein sequence, read N- to C-terminus: Imidazole glycerol phosphate synthase subunit HisF (273 aa).

Active-site residues include aspartate 11 and aspartate 134.

It belongs to the HisA/HisF family. As to quaternary structure, heterodimer of HisH and HisF.

It is found in the cytoplasm. It catalyses the reaction 5-[(5-phospho-1-deoxy-D-ribulos-1-ylimino)methylamino]-1-(5-phospho-beta-D-ribosyl)imidazole-4-carboxamide + L-glutamine = D-erythro-1-(imidazol-4-yl)glycerol 3-phosphate + 5-amino-1-(5-phospho-beta-D-ribosyl)imidazole-4-carboxamide + L-glutamate + H(+). Its pathway is amino-acid biosynthesis; L-histidine biosynthesis; L-histidine from 5-phospho-alpha-D-ribose 1-diphosphate: step 5/9. IGPS catalyzes the conversion of PRFAR and glutamine to IGP, AICAR and glutamate. The HisF subunit catalyzes the cyclization activity that produces IGP and AICAR from PRFAR using the ammonia provided by the HisH subunit. The sequence is that of Imidazole glycerol phosphate synthase subunit HisF from Methanococcoides burtonii (strain DSM 6242 / NBRC 107633 / OCM 468 / ACE-M).